The primary structure comprises 589 residues: Aspartate--tRNA ligase (589 aa).

L-aspartate is bound at residue Glu-174. Residues 198–201 form an aspartate region; it reads QLFK. Position 220 (Arg-220) interacts with L-aspartate. ATP-binding positions include 220–222 and Gln-229; that span reads RDE. Position 448 (His-448) interacts with L-aspartate. Glu-483 is an ATP binding site. An L-aspartate-binding site is contributed by Arg-490. 535 to 538 lines the ATP pocket; the sequence is GIDR.

This sequence belongs to the class-II aminoacyl-tRNA synthetase family. Type 1 subfamily. Homodimer.

Its subcellular location is the cytoplasm. It carries out the reaction tRNA(Asp) + L-aspartate + ATP = L-aspartyl-tRNA(Asp) + AMP + diphosphate. In terms of biological role, catalyzes the attachment of L-aspartate to tRNA(Asp) in a two-step reaction: L-aspartate is first activated by ATP to form Asp-AMP and then transferred to the acceptor end of tRNA(Asp). This chain is Aspartate--tRNA ligase, found in Xylella fastidiosa (strain 9a5c).